The primary structure comprises 150 residues: Large ribosomal subunit protein bL9 (150 aa).

This sequence belongs to the bacterial ribosomal protein bL9 family.

Its function is as follows. Binds to the 23S rRNA. The chain is Large ribosomal subunit protein bL9 from Streptococcus mutans serotype c (strain ATCC 700610 / UA159).